We begin with the raw amino-acid sequence, 35 residues long: Jingzhaotoxin F5-21.66 (35 aa).

3 cysteine pairs are disulfide-bonded: cysteine 2–cysteine 16, cysteine 9–cysteine 21, and cysteine 15–cysteine 29.

It belongs to the neurotoxin 10 (Hwtx-1) family. 48 (Jztx-F5) subfamily. As to expression, expressed by the venom gland.

It is found in the secreted. Its function is as follows. Probable ion channel inhibitor. In Chilobrachys guangxiensis (Chinese earth tiger tarantula), this protein is Jingzhaotoxin F5-21.66.